The sequence spans 55 residues: UPF0434 protein BARBAKC583_1098 (55 aa).

The protein belongs to the UPF0434 family.

The sequence is that of UPF0434 protein BARBAKC583_1098 from Bartonella bacilliformis (strain ATCC 35685 / KC583 / Herrer 020/F12,63).